We begin with the raw amino-acid sequence, 90 residues long: Probable acyl carrier protein (90 aa).

The Carrier domain maps to 9–90 (QVTVEELSAL…LVNGALKTGV (82 aa)). Ser-47 is modified (O-(pantetheine 4'-phosphoryl)serine).

In terms of processing, 4'-phosphopantetheine is transferred from CoA to a specific serine of the apo-ACP-like protein.

Functionally, involved in developmentally regulated synthesis of a compound biosynthetically related to polyketide antibiotics which is essential for spore color in Streptomyces coelicolor. The polypeptide is Probable acyl carrier protein (Streptomyces coelicolor (strain ATCC BAA-471 / A3(2) / M145)).